The sequence spans 279 residues: 2-dehydro-3-deoxyphosphooctonate aldolase (279 aa).

The protein belongs to the KdsA family.

It localises to the cytoplasm. The enzyme catalyses D-arabinose 5-phosphate + phosphoenolpyruvate + H2O = 3-deoxy-alpha-D-manno-2-octulosonate-8-phosphate + phosphate. The protein operates within carbohydrate biosynthesis; 3-deoxy-D-manno-octulosonate biosynthesis; 3-deoxy-D-manno-octulosonate from D-ribulose 5-phosphate: step 2/3. It participates in bacterial outer membrane biogenesis; lipopolysaccharide biosynthesis. This is 2-dehydro-3-deoxyphosphooctonate aldolase from Desulfosudis oleivorans (strain DSM 6200 / JCM 39069 / Hxd3) (Desulfococcus oleovorans).